Here is a 184-residue protein sequence, read N- to C-terminus: Photosystem I assembly protein Ycf4 (184 aa).

2 helical membrane-spanning segments follow: residues 19-39 (ISNFCWACILFLGSLGFLLVG) and 57-77 (IIFFPQGIVMSFYGIAGLFIS).

This sequence belongs to the Ycf4 family.

It localises to the plastid. Its subcellular location is the chloroplast thylakoid membrane. Functionally, seems to be required for the assembly of the photosystem I complex. The chain is Photosystem I assembly protein Ycf4 from Drimys granadensis.